The following is a 248-amino-acid chain: MNSLLVNKAAIVTGGSRGIGFGIAKLFAEHGANVQIWGINEEAGKSAAQDLSDKTGSKVSFALVDVSKNDMVSAQVQKFLAEYGTIDVVVNNAGITRDSLLMRMSEEEWSSVIDTNLGSIYNVCSAVIRPMIKARSGAIVNISSIVGLRGSPGQTNYAAAKAGIIGFSKALSKEVGSKNIRVNCIAPGFIDTDMTKGLSDNLKNEWLKGVPLGRVGTPEEIAMAALFLASNQSSYITGQVLSVDGGMA.

NADP(+)-binding positions include 14–17 (GGSR), 65–66 (DV), and Asn-92. A substrate-binding site is contributed by Ser-144. Residue Tyr-157 is the Proton acceptor of the active site. NADP(+)-binding positions include 157 to 161 (YAAAK) and Ile-190.

This sequence belongs to the short-chain dehydrogenases/reductases (SDR) family. As to quaternary structure, homotetramer.

It carries out the reaction a (3R)-hydroxyacyl-[ACP] + NADP(+) = a 3-oxoacyl-[ACP] + NADPH + H(+). It participates in lipid metabolism; fatty acid biosynthesis. Functionally, catalyzes the NADPH-dependent reduction of beta-ketoacyl-ACP substrates to beta-hydroxyacyl-ACP products, the first reductive step in the elongation cycle of fatty acid biosynthesis. This chain is 3-oxoacyl-[acyl-carrier-protein] reductase FabG (fabG), found in Chlamydia muridarum (strain MoPn / Nigg).